A 707-amino-acid chain; its full sequence is Metal transporter CNNM3 (707 aa).

A helical membrane pass occupies residues 11-27 (LGWLFAALCLGNAAGEA). The N-linked (GlcNAc...) asparagine glycan is linked to Asn73. One can recognise a CNNM transmembrane domain in the interval 130 to 308 (EAAPPWALGL…DPYSDLSKGV (179 aa)). 3 helical membrane-spanning segments follow: residues 193–213 (CALG…AVLL), 221–241 (AVPA…VVPA), and 261–281 (LAVL…ELAA). CBS domains follow at residues 318 to 379 (LTPL…CTPL) and 386 to 452 (YNHP…ILDE). At Ser661 the chain carries Phosphoserine. Over residues 678–691 (LGEKTTTAAGSSHS) the composition is skewed to polar residues. Residues 678–707 (LGEKTTTAAGSSHSRPGVPVEGSPGRNPGV) are disordered. The residue at position 700 (Ser700) is a Phosphoserine.

Belongs to the ACDP family. Widely expressed. Expressed at higher level in heart and spleen.

The protein localises to the cell membrane. Probable metal transporter. This Homo sapiens (Human) protein is Metal transporter CNNM3 (CNNM3).